Reading from the N-terminus, the 376-residue chain is Succinate--CoA ligase [ADP-forming] subunit beta (376 aa).

Residues 9-234 form the ATP-grasp domain; the sequence is KAIAKKYGIP…ERELSELEKE (226 aa). Residues K45, 52–54, E91, E94, and E99 contribute to the ATP site; that span reads GRG. Residues N191 and D204 each contribute to the Mg(2+) site. Substrate contacts are provided by residues N254 and 311–313; that span reads GIT.

It belongs to the succinate/malate CoA ligase beta subunit family. As to quaternary structure, heterotetramer of two alpha and two beta subunits. Mg(2+) is required as a cofactor.

The enzyme catalyses succinate + ATP + CoA = succinyl-CoA + ADP + phosphate. The catalysed reaction is GTP + succinate + CoA = succinyl-CoA + GDP + phosphate. The protein operates within carbohydrate metabolism; tricarboxylic acid cycle; succinate from succinyl-CoA (ligase route): step 1/1. In terms of biological role, succinyl-CoA synthetase functions in the citric acid cycle (TCA), coupling the hydrolysis of succinyl-CoA to the synthesis of either ATP or GTP and thus represents the only step of substrate-level phosphorylation in the TCA. The beta subunit provides nucleotide specificity of the enzyme and binds the substrate succinate, while the binding sites for coenzyme A and phosphate are found in the alpha subunit. In Ignicoccus hospitalis (strain KIN4/I / DSM 18386 / JCM 14125), this protein is Succinate--CoA ligase [ADP-forming] subunit beta.